Reading from the N-terminus, the 261-residue chain is Complex I assembly factor TIMMDC1, mitochondrial (261 aa).

3 helical membrane-spanning segments follow: residues 67 to 87, 131 to 151, and 183 to 203; these read LNSV…YGGV, WGWR…CMSV, and AGGI…LLLM.

The protein belongs to the Tim17/Tim22/Tim23 family. Associates with complex I assembly intermediates during its biogenesis in a NdufAF3 and NdufAF4 dependent manner.

It localises to the membrane. Functionally, chaperone protein involved in the assembly of the mitochondrial NADH:ubiquinone oxidoreductase complex (complex I). Essential for viability. This is Complex I assembly factor TIMMDC1, mitochondrial from Drosophila melanogaster (Fruit fly).